Reading from the N-terminus, the 690-residue chain is Rho guanine nucleotide exchange factor 4 (690 aa).

The ABR (APC-binding region) domain stretch occupies residues Lys73–Ala126. Positions Leu113 to Pro145 are disordered. One can recognise an SH3 domain in the interval Gly194–Asn253. The disordered stretch occupies residues Pro257 to Asp282. One can recognise a DH domain in the interval Met284–Arg468. The 108-residue stretch at Glu499–Glu606 folds into the PH domain.

Isoform 3 interacts with RHOA and RAC1, and (via ABR domain) with APC. Found in a complex consisting of ARHGEF4, APC and CTNNB1. In terms of tissue distribution, expressed at high levels in the brain, skeletal muscle and testis and at low levels in the kidney, lung, small intestine, ovary and prostate. Expression is aberrantly enhanced in most colorectal tumors.

Its subcellular location is the cytoplasm. It is found in the cell projection. It localises to the ruffle membrane. In terms of biological role, acts as a guanine nucleotide exchange factor (GEF) for RHOA, RAC1 and CDC42 GTPases. Binding of APC may activate RAC1 GEF activity. The APC-ARHGEF4 complex seems to be involved in cell migration as well as in E-cadherin-mediated cell-cell adhesion. Required for MMP9 up-regulation via the JNK signaling pathway in colorectal tumor cells. Involved in tumor angiogenesis and may play a role in intestinal adenoma formation and tumor progression. This Homo sapiens (Human) protein is Rho guanine nucleotide exchange factor 4 (ARHGEF4).